The sequence spans 410 residues: Arginine deiminase (410 aa).

The active-site Amidino-cysteine intermediate is Cys399.

This sequence belongs to the arginine deiminase family.

The protein resides in the cytoplasm. The enzyme catalyses L-arginine + H2O = L-citrulline + NH4(+). Its pathway is amino-acid degradation; L-arginine degradation via ADI pathway; carbamoyl phosphate from L-arginine: step 1/2. The sequence is that of Arginine deiminase from Listeria monocytogenes serotype 4b (strain F2365).